Here is a 252-residue protein sequence, read N- to C-terminus: Large ribosomal subunit protein uL4 (252 aa).

Belongs to the universal ribosomal protein uL4 family. As to quaternary structure, part of the 50S ribosomal subunit.

In terms of biological role, one of the primary rRNA binding proteins, this protein initially binds near the 5'-end of the 23S rRNA. It is important during the early stages of 50S assembly. It makes multiple contacts with different domains of the 23S rRNA in the assembled 50S subunit and ribosome. Forms part of the polypeptide exit tunnel. The polypeptide is Large ribosomal subunit protein uL4 (Methanococcus maripaludis (strain C6 / ATCC BAA-1332)).